A 149-amino-acid chain; its full sequence is Large ribosomal subunit protein bL9 (149 aa).

This sequence belongs to the bacterial ribosomal protein bL9 family.

Binds to the 23S rRNA. This chain is Large ribosomal subunit protein bL9, found in Anaeromyxobacter dehalogenans (strain 2CP-C).